Reading from the N-terminus, the 239-residue chain is Serine protease SplF (239 aa).

Residues 1 to 36 form the signal peptide; the sequence is MNKNIIIKSIGALTILTSITGVGTTMVEGIQQTAKA. Catalysis depends on charge relay system residues His-75, Asp-114, and Ser-192.

This sequence belongs to the peptidase S1B family.

The protein localises to the secreted. The chain is Serine protease SplF (splF) from Staphylococcus aureus (strain USA300).